A 78-amino-acid chain; its full sequence is UPF0291 protein Exig_1097 (78 aa).

The tract at residues Glu-57–Gln-78 is disordered. Basic and acidic residues predominate over residues Thr-63 to Gln-78.

It belongs to the UPF0291 family.

Its subcellular location is the cytoplasm. The protein is UPF0291 protein Exig_1097 of Exiguobacterium sibiricum (strain DSM 17290 / CCUG 55495 / CIP 109462 / JCM 13490 / 255-15).